Reading from the N-terminus, the 377-residue chain is Serine/threonine-protein phosphatase PP2A-2 catalytic subunit (377 aa).

The disordered stretch occupies residues 1–66 (MDMEIDDPMH…SGIADHKSSK (66 aa)). Residues 28-40 (DDGKNNTKARSND) are compositionally biased toward basic and acidic residues. Serine 38 carries the phosphoserine modification. The residue at position 43 (threonine 43) is a Phosphothreonine. Mn(2+) contacts are provided by aspartate 125, histidine 127, aspartate 153, and asparagine 185. The active-site Proton donor is the histidine 186. Mn(2+)-binding residues include histidine 235 and histidine 309. At leucine 377 the chain carries Leucine methyl ester.

This sequence belongs to the PPP phosphatase family. PP-2A subfamily. In terms of assembly, inactivated in a complex with phosphatase methylesterase PPE1 (PP2Ai). Interacts with phosphatase 2A activator RRD2, which can reactivate PP2Ai by dissociating the catalytic subunit from the complex. Interacts with TAP42. Requires Mn(2+) as cofactor. In terms of processing, reversibly methyl esterified on Leu-377 by leucine carboxyl methyltransferase 1 (PPM1) and protein phosphatase methylesterase 1 (PPE1). Carboxyl methylation influences the affinity of the catalytic subunit for the different regulatory subunits, thereby modulating the PP2A holoenzyme's substrate specificity, enzyme activity and cellular localization.

It carries out the reaction O-phospho-L-seryl-[protein] + H2O = L-seryl-[protein] + phosphate. The enzyme catalyses O-phospho-L-threonyl-[protein] + H2O = L-threonyl-[protein] + phosphate. In terms of biological role, exact function not known, phosphatase 2A performs an essential cellular function. This chain is Serine/threonine-protein phosphatase PP2A-2 catalytic subunit (PPH22), found in Saccharomyces cerevisiae (strain ATCC 204508 / S288c) (Baker's yeast).